The primary structure comprises 240 residues: Large ribosomal subunit protein uL2 (240 aa).

Residues 200-240 (HPFGGGGRQHPGKPKSISRNAPPGRKVGDIASKRTGRGGNE) form a disordered region.

This sequence belongs to the universal ribosomal protein uL2 family. Part of the 50S ribosomal subunit. Forms a bridge to the 30S subunit in the 70S ribosome. Interacts weakly with protein L37Ae.

Its function is as follows. One of the primary rRNA binding proteins. Required for association of the 30S and 50S subunits to form the 70S ribosome, for tRNA binding and peptide bond formation. It has been suggested to have peptidyltransferase activity; this is somewhat controversial. Makes several contacts with the 16S rRNA in the 70S ribosome. This chain is Large ribosomal subunit protein uL2 (rpl2), found in Haloarcula marismortui (strain ATCC 43049 / DSM 3752 / JCM 8966 / VKM B-1809) (Halobacterium marismortui).